The sequence spans 444 residues: Orexin receptor type 2 (444 aa).

Over residues Met-1 to Pro-10 the composition is skewed to basic and acidic residues. A disordered region spans residues Met-1 to Asn-30. The Extracellular segment spans residues Met-1–Glu-54. N-linked (GlcNAc...) asparagine glycans are attached at residues Asn-14 and Asn-22. The segment covering Asn-14–Pro-27 has biased composition (polar residues). The segment at Asp-33–His-49 is required for response to orexin-A. Residues Trp-55 to Val-75 form a helical membrane-spanning segment. Over Cys-76 to Val-88 the chain is Cytoplasmic. The chain crosses the membrane as a helical span at residues Thr-89–Ala-110. Residues Thr-111–Cys-127 are Extracellular-facing. Residues Cys-127 and Cys-210 are joined by a disulfide bond. Residues Lys-128 to Leu-150 form a helical membrane-spanning segment. The Cytoplasmic segment spans residues Asp-151–Arg-170. Residues Asn-171 to Met-191 form a helical membrane-spanning segment. Topologically, residues Glu-192–Met-222 are extracellular. A glycan (N-linked (GlcNAc...) asparagine) is linked at Asn-202. A helical membrane pass occupies residues Tyr-223–Tyr-243. Residues Leu-244–Arg-304 are Cytoplasmic-facing. A helical transmembrane segment spans residues Met-305–Leu-326. The Extracellular segment spans residues Lys-327–Val-342. The helical transmembrane segment at Tyr-343 to Phe-366 threads the bilayer. Topologically, residues Leu-367 to Trp-444 are cytoplasmic.

Belongs to the G-protein coupled receptor 1 family.

The protein localises to the cell membrane. Its function is as follows. Nonselective, high-affinity receptor for both orexin-A and orexin-B neuropeptides. Triggers an increase in cytoplasmic Ca(2+) levels in response to orexin-A binding. The sequence is that of Orexin receptor type 2 (HCRTR2) from Canis lupus familiaris (Dog).